We begin with the raw amino-acid sequence, 438 residues long: Ribosome biogenesis protein NOP53 (438 aa).

Disordered stretches follow at residues 1-23 (MVAGKRTGAAKGSRHNKKYWRKG) and 247-346 (HPKY…RKKE). Positions 12–21 (GSRHNKKYWR) are enriched in basic residues. 3 stretches are compositionally biased toward basic and acidic residues: residues 265-288 (KSMKTGGEAEPKSQRVECDRMTKE), 297-318 (QKLDKEEKRRLEEKAKEQDSHN), and 325-346 (LHKELDEEEKQRHEESEVRKKE).

The protein belongs to the NOP53 family.

The protein resides in the nucleus. The protein localises to the nucleolus. It localises to the nucleoplasm. Functionally, may play a role in ribosome biogenesis, being required for integration of the 5S RNP into the ribosomal large subunit. This is Ribosome biogenesis protein NOP53 from Caenorhabditis elegans.